Here is a 169-residue protein sequence, read N- to C-terminus: uncharacterized protein (169 aa).

This is an uncharacterized protein from Methanocaldococcus jannaschii (strain ATCC 43067 / DSM 2661 / JAL-1 / JCM 10045 / NBRC 100440) (Methanococcus jannaschii).